We begin with the raw amino-acid sequence, 882 residues long: Formin-like protein 9 (882 aa).

The N-terminal stretch at 1–19 is a signal peptide; that stretch reads MGMAMRCVLVLFSVSPVLL. Positions 67-92 are disordered; sequence SRGRRHKRYSEAPAPAPAPVPAHQAR. Residues 138-158 form a helical membrane-spanning segment; that stretch reads IVALGVVGLCLVVLGVVIAAF. 3 disordered regions span residues 178 to 202, 293 to 316, and 401 to 471; these read RHGS…PDPL, THDS…LSPK, and TMTN…PLPR. The span at 298-308 shows a compositional bias: low complexity; the sequence is SDSSYQSLSPD. Over residues 427–441 the composition is skewed to pro residues; it reads KPAPPPPPQKNPPPN. The FH2 domain occupies 462–882; it reads VGKDGSPLPR…QTLNLVLPLK (421 aa).

It belongs to the formin-like family. Class-I subfamily.

The protein localises to the membrane. This Oryza sativa subsp. japonica (Rice) protein is Formin-like protein 9 (FH9).